The following is a 598-amino-acid chain: Nuclear receptor subfamily 4 group A member 2 (598 aa).

The disordered stretch occupies residues 1 to 22 (MPCVQAQYGSSPQGASPASQSY). A compositionally biased stretch (low complexity) spans 8-22 (YGSSPQGASPASQSY). Residues 260–335 (EGLCAVCGDN…VGMVKEVVRT (76 aa)) constitute a DNA-binding region (nuclear receptor). NR C4-type zinc fingers lie at residues 263–283 (CAVC…CEGC) and 299–318 (CLAN…CQYC). Residues 287 to 314 (FKRTVQKNAKYVCLANKNCPVDKRRRNR) carry the Bipartite nuclear localization signal (NLS1) motif. The disordered stretch occupies residues 337–361 (SLKGRRGRLPSKPKSPQEPSPPSPP). The Nuclear localization signal (NLS1) signature appears at 338-350 (LKGRRGRLPSKPK). A compositionally biased stretch (pro residues) spans 352–361 (PQEPSPPSPP). One can recognise an NR LBD domain in the interval 360–595 (PPVSLISALV…AIIDKLFLDT (236 aa)). The nuclear export sequence (NES1) signature appears at 443-452 (FLELFVLRLA). The nuclear export sequence (NES2) motif lies at 568–577 (QGLQRIFYLK).

This sequence belongs to the nuclear hormone receptor family. NR4 subfamily. Interacts with SFPQ, NCOR2, SIN3A and HADC1. The interaction with NCOR2 increases in the absence of PITX3. Interacts with PER2.

It is found in the cytoplasm. Its subcellular location is the nucleus. In terms of biological role, transcriptional regulator which is important for the differentiation and maintenance of meso-diencephalic dopaminergic (mdDA) neurons during development. It is crucial for expression of a set of genes such as SLC6A3, SLC18A2, TH and DRD2 which are essential for development of mdDA neurons. In Bos taurus (Bovine), this protein is Nuclear receptor subfamily 4 group A member 2 (NR4A2).